Here is a 207-residue protein sequence, read N- to C-terminus: Large ribosomal subunit protein bL25 (207 aa).

Residues 1-20 (MANHQIKAQRRKDEGKGASR) are disordered.

This sequence belongs to the bacterial ribosomal protein bL25 family. CTC subfamily. As to quaternary structure, part of the 50S ribosomal subunit; part of the 5S rRNA/L5/L18/L25 subcomplex. Contacts the 5S rRNA. Binds to the 5S rRNA independently of L5 and L18.

Its function is as follows. This is one of the proteins that binds to the 5S RNA in the ribosome where it forms part of the central protuberance. This Xylella fastidiosa (strain M12) protein is Large ribosomal subunit protein bL25.